Reading from the N-terminus, the 679-residue chain is Tripartite terminase subunit 1 (679 aa).

Residues 180 to 208 (CIYCLNEHMMLPNQGESLPSLMMCVNCKH) form a C3H1-type zinc finger.

This sequence belongs to the herpesviridae TRM1 protein family. In terms of assembly, associates with TRM2 and TRM3 to form the tripartite terminase complex. Interacts with portal protein.

It localises to the host nucleus. Component of the molecular motor that translocates viral genomic DNA in empty capsid during DNA packaging. Forms a tripartite terminase complex together with TRM2 and TRM3 in the host cytoplasm. Once the complex reaches the host nucleus, it interacts with the capsid portal vertex. This portal forms a ring in which genomic DNA is translocated into the capsid. TRM1 carries an endonuclease activity that plays an important role for the cleavage of concatemeric viral DNA into unit length genomes. The protein is Tripartite terminase subunit 1 of Saimiriine herpesvirus 2 (strain 11) (SaHV-2).